Consider the following 514-residue polypeptide: Xylose import ATP-binding protein XylG (514 aa).

ABC transporter domains lie at 7-246 and 263-508; these read FEMR…VGRE and LEAR…IHAE. Position 39-46 (39-46) interacts with ATP; it reads GENGAGKS.

It belongs to the ABC transporter superfamily. Xylose importer (TC 3.A.1.2.4) family. As to quaternary structure, the complex is composed of two ATP-binding proteins (XylG), two transmembrane proteins (XylH) and a solute-binding protein (XylF).

The protein localises to the cell inner membrane. It catalyses the reaction D-xylose(out) + ATP + H2O = D-xylose(in) + ADP + phosphate + H(+). Part of the ABC transporter complex XylFGH involved in xylose import. Responsible for energy coupling to the transport system. In Ralstonia nicotianae (strain ATCC BAA-1114 / GMI1000) (Ralstonia solanacearum), this protein is Xylose import ATP-binding protein XylG.